Reading from the N-terminus, the 404-residue chain is uncharacterized protein (404 aa).

Transmembrane regions (helical) follow at residues 15 to 35 (WSLL…PGFL), 43 to 63 (NTLA…DIFA), 84 to 104 (MVLP…GLAF), 121 to 141 (GITP…IFVI), 154 to 174 (IAGF…APPV), 187 to 207 (ISIF…ITFA), 231 to 251 (VVGI…VLGV), 279 to 299 (IFGL…AYTS), 316 to 336 (GIII…GQPA), 338 to 358 (ILVL…GTLL), and 373 to 393 (PLWL…MGIY).

The protein belongs to the NRAMP family.

Its subcellular location is the cell membrane. This is an uncharacterized protein from Bacillus subtilis (strain 168).